Reading from the N-terminus, the 161-residue chain is ATP synthase subunit b 1 (161 aa).

The helical transmembrane segment at 5–25 (PETWVAIAFLLLMGVFAYVGV) threads the bilayer.

This sequence belongs to the ATPase B chain family. F-type ATPases have 2 components, F(1) - the catalytic core - and F(0) - the membrane proton channel. F(1) has five subunits: alpha(3), beta(3), gamma(1), delta(1), epsilon(1). F(0) has three main subunits: a(1), b(2) and c(10-14). The alpha and beta chains form an alternating ring which encloses part of the gamma chain. F(1) is attached to F(0) by a central stalk formed by the gamma and epsilon chains, while a peripheral stalk is formed by the delta and b chains.

It localises to the cell inner membrane. Functionally, f(1)F(0) ATP synthase produces ATP from ADP in the presence of a proton or sodium gradient. F-type ATPases consist of two structural domains, F(1) containing the extramembraneous catalytic core and F(0) containing the membrane proton channel, linked together by a central stalk and a peripheral stalk. During catalysis, ATP synthesis in the catalytic domain of F(1) is coupled via a rotary mechanism of the central stalk subunits to proton translocation. Component of the F(0) channel, it forms part of the peripheral stalk, linking F(1) to F(0). This is ATP synthase subunit b 1 from Nitrobacter winogradskyi (strain ATCC 25391 / DSM 10237 / CIP 104748 / NCIMB 11846 / Nb-255).